Consider the following 576-residue polypeptide: Origin recognition complex subunit 2 (576 aa).

One copy of the Involved in LRWD1-binding repeat lies at 1–100; the sequence is MSTLRLKEAK…RNKVYSFQHR (100 aa). Threonine 116 bears the Phosphothreonine mark. Positions 119–218 are disordered; it reads KIDPLASNDP…SQGQNRLLPA (100 aa). Residues 149–161 are compositionally biased toward polar residues; the sequence is ENNNKNEFPSIQP. Over residues 186–200 the composition is skewed to acidic residues; that stretch reads SEDDEEVAKDDEEDT. Serine 246 bears the Phosphoserine mark.

It belongs to the ORC2 family. In terms of assembly, component of ORC, a complex composed of at least 6 subunits: ORC1, ORC2, ORC3, ORC4, ORC5 and ORC6. ORC is regulated in a cell-cycle dependent manner. It is sequentially assembled at the exit from anaphase of mitosis and disassembled as cells enter S phase. Interacts with DBF4. Interacts with MCM10. Interacts with LRWD1 throughout the cell cycle; this interaction, which occurs only with non-ubiquitinated form of LRWD1, prevents LRWD1 ubiquitination and hence stabilizes the protein. Interacts with POLQ.

The protein localises to the nucleus. Its function is as follows. Component of the origin recognition complex (ORC) that binds origins of replication. DNA-binding is ATP-dependent. The specific DNA sequences that define origins of replication have not been identified yet. ORC is required to assemble the pre-replication complex necessary to initiate DNA replication. Binds histone H3 and H4 trimethylation marks H3K9me3, H3K20me3 and H4K27me3. Stabilizes LRWD1, by protecting it from ubiquitin-mediated proteasomal degradation. Also stabilizes ORC3. This is Origin recognition complex subunit 2 (Orc2) from Rattus norvegicus (Rat).